A 66-amino-acid polypeptide reads, in one-letter code: Large ribosomal subunit protein bL31 (66 aa).

4 residues coordinate Zn(2+): C16, C18, C36, and C39.

This sequence belongs to the bacterial ribosomal protein bL31 family. Type A subfamily. As to quaternary structure, part of the 50S ribosomal subunit. It depends on Zn(2+) as a cofactor.

In terms of biological role, binds the 23S rRNA. This is Large ribosomal subunit protein bL31 from Pelobacter propionicus (strain DSM 2379 / NBRC 103807 / OttBd1).